Reading from the N-terminus, the 239-residue chain is Pre-mRNA-splicing factor isy1 (239 aa).

This sequence belongs to the ISY1 family. As to quaternary structure, associated with the spliceosome.

Its subcellular location is the cytoplasm. The protein localises to the nucleus. Its function is as follows. Involved in pre-mRNA splicing. In Neurospora crassa (strain ATCC 24698 / 74-OR23-1A / CBS 708.71 / DSM 1257 / FGSC 987), this protein is Pre-mRNA-splicing factor isy1 (msp-7).